The following is a 181-amino-acid chain: Histone deacetylase complex subunit SAP30L (181 aa).

The Atypical zinc finger occupies C26–H74. The disordered stretch occupies residues R82–V103. The Nuclear localization signal (NLS) signature appears at N83–K88. The segment at R85–R87 is important for DNA and phosphoinositide binding.

This sequence belongs to the SAP30 family. In terms of assembly, interacts with components of the histone deacetylase complex sin3a, hdac1 and hdac2. Binds histones and nucleosomes.

The protein localises to the nucleus. The protein resides in the nucleolus. Functions as a transcription repressor, probably via its interaction with histone deacetylase complexes. Involved in the functional recruitment of the class 1 Sin3-histone deacetylase complex (HDAC) to the nucleolus. Binds DNA, apparently without sequence-specificity, and bends bound double-stranded DNA. Binds phosphoinositol phosphates (phosphoinositol 3-phosphate, phosphoinositol 4-phosphate and phosphoinositol 5-phosphate) via the same basic sequence motif that mediates DNA binding and nuclear import. In Xenopus tropicalis (Western clawed frog), this protein is Histone deacetylase complex subunit SAP30L (sap30l).